A 155-amino-acid chain; its full sequence is Small ribosomal subunit protein uS7cz/uS7cy (155 aa).

The protein belongs to the universal ribosomal protein uS7 family. In terms of assembly, part of the 30S ribosomal subunit.

It is found in the plastid. The protein localises to the chloroplast. Functionally, one of the primary rRNA binding proteins, it binds directly to 16S rRNA where it nucleates assembly of the head domain of the 30S subunit. The chain is Small ribosomal subunit protein uS7cz/uS7cy (rps7-A) from Lemna minor (Common duckweed).